The chain runs to 153 residues: uncharacterized protein (153 aa).

Alanine 2 carries the post-translational modification N-acetylalanine.

This is an uncharacterized protein from Arabidopsis thaliana (Mouse-ear cress).